Here is a 35-residue protein sequence, read N- to C-terminus: U5-ctenitoxin-Co1a (35 aa).

4 disulfide bridges follow: cysteine 4-cysteine 18, cysteine 11-cysteine 24, cysteine 17-cysteine 32, and cysteine 26-cysteine 30.

As to expression, expressed by the venom gland.

The protein resides in the secreted. Functionally, blocks voltage-gated sodium channels (Nav). This is U5-ctenitoxin-Co1a from Ctenus ornatus (Brazilian spider).